Consider the following 644-residue polypeptide: Protein cueball (644 aa).

A signal peptide spans 1–26 (MIRIRFGMDVLLVLLLATCLLSPAHG). Topologically, residues 27–531 (TPLEWDFAVT…VCLTPKVWTS (505 aa)) are extracellular. 2 N-linked (GlcNAc...) asparagine glycosylation sites follow: N82 and N108. 3 LDL-receptor class B repeats span residues 121 to 166 (MNLF…DVCR), 167 to 211 (RKLY…DQLS), and 212 to 257 (DRLF…TNDA). N175, N190, and N196 each carry an N-linked (GlcNAc...) asparagine glycan. N-linked (GlcNAc...) asparagine glycosylation is present at N313. EGF-like domains follow at residues 398 to 430 (EIRE…FTGE) and 433 to 471 (EVSV…ARCE). 5 cysteine pairs are disulfide-bonded: C402/C411, C406/C421, C437/C447, C441/C459, and C461/C470. 2 N-linked (GlcNAc...) asparagine glycosylation sites follow: N473 and N508. The chain crosses the membrane as a helical span at residues 532 to 552 (SVIIILVIGIVSSLLLVAVIV). The Cytoplasmic portion of the chain corresponds to 553-644 (HGIRRLYKPK…LIHNMEDDLY (92 aa)).

This sequence belongs to the cueball family.

The protein localises to the cell membrane. Functionally, has a role in spermatogenesis and oogenesis. The sequence is that of Protein cueball from Drosophila erecta (Fruit fly).